Consider the following 386-residue polypeptide: Protein phosphatase methylesterase 1 (386 aa).

Residues 1–38 are disordered; the sequence is MSALEKSMHLGRLPSRPPLPGSGGSQSGAKMRMGPGRK. At S15 the chain carries Phosphoserine. Residue R16 is modified to Asymmetric dimethylarginine; alternate. Residue R16 is modified to Omega-N-methylarginine; alternate. S42 is modified (phosphoserine). S156 is an active-site residue. A compositionally biased stretch (acidic residues) spans 254 to 265; that stretch reads IIEEEEEDEEGS. A disordered region spans residues 254-280; that stretch reads IIEEEEEDEEGSESISKRKKEDDMETK. The span at 268 to 280 shows a compositional bias: basic and acidic residues; sequence ISKRKKEDDMETK. Residue H349 is part of the active site.

It belongs to the AB hydrolase superfamily. Binds PPP2CA and PPP2CB. Phosphorylated by SIK1 following increases in intracellular sodium, leading to dissociation from the protein phosphatase 2A (PP2A) complex and subsequent dephosphorylation of sodium/potassium-transporting ATPase ATP1A1.

It catalyses the reaction [phosphatase 2A protein]-C-terminal L-leucine methyl ester + H2O = [phosphatase 2A protein]-C-terminal L-leucine + methanol + H(+). Demethylates proteins that have been reversibly carboxymethylated. Demethylates PPP2CB (in vitro) and PPP2CA. Binding to PPP2CA displaces the manganese ion and inactivates the enzyme. The polypeptide is Protein phosphatase methylesterase 1 (PPME1) (Pongo abelii (Sumatran orangutan)).